Reading from the N-terminus, the 419-residue chain is Imidazolonepropionase (419 aa).

Residues histidine 87 and histidine 89 each coordinate Fe(3+). The Zn(2+) site is built by histidine 87 and histidine 89. The 4-imidazolone-5-propanoate site is built by arginine 96, tyrosine 159, and histidine 192. Position 159 (tyrosine 159) interacts with N-formimidoyl-L-glutamate. Histidine 257 serves as a coordination point for Fe(3+). Histidine 257 contributes to the Zn(2+) binding site. Glutamine 260 is a 4-imidazolone-5-propanoate binding site. Aspartate 332 is a Fe(3+) binding site. Aspartate 332 is a Zn(2+) binding site. Positions 334 and 336 each coordinate N-formimidoyl-L-glutamate. Position 337 (serine 337) interacts with 4-imidazolone-5-propanoate.

The protein belongs to the metallo-dependent hydrolases superfamily. HutI family. The cofactor is Zn(2+). It depends on Fe(3+) as a cofactor.

It localises to the cytoplasm. It carries out the reaction 4-imidazolone-5-propanoate + H2O = N-formimidoyl-L-glutamate. It functions in the pathway amino-acid degradation; L-histidine degradation into L-glutamate; N-formimidoyl-L-glutamate from L-histidine: step 3/3. Its function is as follows. Catalyzes the hydrolytic cleavage of the carbon-nitrogen bond in imidazolone-5-propanoate to yield N-formimidoyl-L-glutamate. It is the third step in the universal histidine degradation pathway. In Alteromonas mediterranea (strain DSM 17117 / CIP 110805 / LMG 28347 / Deep ecotype), this protein is Imidazolonepropionase.